Here is a 122-residue protein sequence, read N- to C-terminus: Large ribosomal subunit protein uL14 (122 aa).

This sequence belongs to the universal ribosomal protein uL14 family. In terms of assembly, part of the 50S ribosomal subunit. Forms a cluster with proteins L3 and L19. In the 70S ribosome, L14 and L19 interact and together make contacts with the 16S rRNA in bridges B5 and B8.

Its function is as follows. Binds to 23S rRNA. Forms part of two intersubunit bridges in the 70S ribosome. In Streptococcus thermophilus (strain CNRZ 1066), this protein is Large ribosomal subunit protein uL14.